We begin with the raw amino-acid sequence, 364 residues long: Aminomethyltransferase (364 aa).

Belongs to the GcvT family. The glycine cleavage system is composed of four proteins: P, T, L and H.

It catalyses the reaction N(6)-[(R)-S(8)-aminomethyldihydrolipoyl]-L-lysyl-[protein] + (6S)-5,6,7,8-tetrahydrofolate = N(6)-[(R)-dihydrolipoyl]-L-lysyl-[protein] + (6R)-5,10-methylene-5,6,7,8-tetrahydrofolate + NH4(+). Its function is as follows. The glycine cleavage system catalyzes the degradation of glycine. This Shewanella piezotolerans (strain WP3 / JCM 13877) protein is Aminomethyltransferase.